The primary structure comprises 380 residues: Small ribosomal subunit protein uS3m (380 aa).

It belongs to the universal ribosomal protein uS3 family.

It is found in the mitochondrion. Its function is as follows. Essential for mitochondrial protein synthesis and required for the maturation of small ribosomal subunits. The protein is Small ribosomal subunit protein uS3m (VAR1) of Cyberlindnera mrakii (Yeast).